A 3011-amino-acid chain; its full sequence is Genome polyprotein (3011 aa).

The residue at position 2 (Ser-2) is an N-acetylserine; by host. The interval 2–23 (STNPKPQRKTKRNTNRRPQDVK) is interaction with STAT1. Positions 2–58 (STNPKPQRKTKRNTNRRPQDVKFPGGGQIVGGVYLLPRRGPRLGVRATRKTSERSQP) are interaction with EIF2AK2/PKR. An interaction with DDX3X region spans residues 2–59 (STNPKPQRKTKRNTNRRPQDVKFPGGGQIVGGVYLLPRRGPRLGVRATRKTSERSQPR). The segment at 2 to 75 (STNPKPQRKT…PKARRPEGRT (74 aa)) is disordered. Residues 2–168 (STNPKPQRKT…EDGVNYATGN (167 aa)) are Cytoplasmic-facing. Short sequence motifs (nuclear localization signal) lie at residues 5–13 (PKPQRKTKR) and 38–43 (PRRGPR). A compositionally biased stretch (basic residues) spans 7–16 (PQRKTKRNTN). Residues 32-47 (GGVYLLPRRGPRLGVR) are compositionally biased toward low complexity. Ser-53 bears the Phosphoserine; by host mark. Short sequence motifs (nuclear localization signal) lie at residues 58 to 64 (PRGRRQP) and 66 to 71 (PKARRP). Residues 58-68 (PRGRRQPIPKA) are compositionally biased toward basic residues. The residue at position 99 (Ser-99) is a Phosphoserine; by host. Positions 112–152 (PRRRSRNLGKVIDTLTCGFADLMGYIPLVGAPLGGAARALA) are important for endoplasmic reticulum and mitochondrial localization. A Phosphoserine; by host PKA modification is found at Ser-116. Residues 122 to 173 (VIDTLTCGFADLMGYIPLVGAPLGGAARALAHGVRVLEDGVNYATGNLPGCS) are interaction with APOA2. Residues 164-167 (YATG) are important for lipid droplets localization. Residues 169–189 (LPGCSFSIFLLALLSCLTVPA) form a helical membrane-spanning segment. A propeptide spans 178 to 191 (LLALLSCLTVPASA) (ER anchor for the core protein, removed in mature form by host signal peptidase). Topologically, residues 190–358 (SAYQVRNSSG…AGAHWGVLAG (169 aa)) are lumenal. N-linked (GlcNAc...) asparagine; by host glycosylation is found at Asn-196, Asn-209, and Asn-234. An important for fusion region spans residues 265–296 (LVGSATLCSALYVGDLCGSVFLVGQLFTFSPR). Asn-305 is a glycosylation site (N-linked (GlcNAc...) asparagine; by host). Residues 359–379 (IKYFSMVGNWAKVLVVLLLFA) traverse the membrane as a helical segment. Residues 380-725 (GVDAETHVTG…WEYVVLLFLL (346 aa)) lie on the Lumenal side of the membrane. Residues 385–411 (THVTGGNAGRTTAGLVGLLTPGAKQNI) form an HVR1 region. Residues Asn-417, Asn-423, Asn-430, and Asn-448 are each glycosylated (N-linked (GlcNAc...) (high mannose) asparagine; by host). 4 cysteine pairs are disulfide-bonded: Cys-429-Cys-552, Cys-452-Cys-459, Cys-486-Cys-494, and Cys-503-Cys-508. An HVR2 region spans residues 474-479 (YANGSG). An N-linked (GlcNAc...) (high mannose) asparagine; by host glycan is attached at Asn-476. Residues 480–493 (LDERPYCWHYPPRP) form a CD81-binding 1 region. N-linked (GlcNAc...) (high mannose) asparagine; by host glycosylation is found at Asn-532 and Asn-540. Residues 544–551 (PPLGNWFG) form a CD81-binding 2 region. A glycan (N-linked (GlcNAc...) (high mannose) asparagine; by host) is linked at Asn-556. A disulfide bond links Cys-564 and Cys-569. Asn-576 carries an N-linked (GlcNAc...) (high mannose) asparagine; by host glycan. 3 cysteine pairs are disulfide-bonded: Cys-581/Cys-585, Cys-597/Cys-620, and Cys-607/Cys-644. 2 N-linked (GlcNAc...) (high mannose) asparagine; by host glycosylation sites follow: Asn-623 and Asn-645. Cys-652 and Cys-677 are joined by a disulfide. The interval 660–671 (SELSPLLLSTTQ) is EIF2AK2/eIF2-alpha phosphorylation homology domain (PePHD). A helical transmembrane segment spans residues 726 to 746 (LADARVCSCLWMMLLISQAEA). At 747 to 757 (ALENLVILNAA) the chain is on the lumenal side. Residues 758–778 (SLAGTHGLVSFLVFFCFAWYL) form a helical membrane-spanning segment. The Cytoplasmic portion of the chain corresponds to 779–781 (KGR). The chain crosses the membrane as a helical span at residues 782-803 (WVPGAVYALYGMWPLLLLLLAL). The Lumenal segment spans residues 804–813 (PQRAYALDTE). A helical transmembrane segment spans residues 814–834 (VAASCGGVVLVGLMALTLSPY). At 835-838 (YKRY) the chain is on the cytoplasmic side. A helical membrane pass occupies residues 839 to 859 (ISWCMWWLQYFLTRVEAQLHV). Residues 860-881 (WVPPLNVRGGRDAVILLTCVVH) lie on the Lumenal side of the membrane. Residues 882–902 (PALVFDITKLLLAIFGPLWIL) form a helical membrane-spanning segment. The region spanning 899 to 1026 (LWILQASLLK…GMVSKGWRLL (128 aa)) is the Peptidase C18 domain. Residues 903–1657 (QASLLKVPYF…CMSADLEVVT (755 aa)) are Cytoplasmic-facing. The protease NS2-3 stretch occupies residues 904–1206 (ASLLKVPYFV…PVENLETTMR (303 aa)). The S-palmitoyl cysteine; by host moiety is linked to residue Cys-922. An interaction with host SCPS1 region spans residues 929–949 (AGGHYVQMAIIKLGALTGTCV). Active-site for protease NS2 activity; shared with dimeric partner residues include His-952, Glu-972, and Cys-993. One can recognise a Peptidase S29 domain in the interval 1027 to 1208 (APITAYAQQT…ENLETTMRSP (182 aa)). Catalysis depends on charge relay system; for serine protease NS3 activity residues His-1083 and Asp-1107. Residues Cys-1123 and Cys-1125 each coordinate Zn(2+). The active-site Charge relay system; for serine protease NS3 activity is Ser-1165. Cys-1171 and His-1175 together coordinate Zn(2+). Positions 1217–1369 (PAVPQSFQVA…PNIEEVALST (153 aa)) constitute a Helicase ATP-binding domain. 1230–1237 (APTGSGKS) is an ATP binding site. Ser-1237 and Glu-1317 together coordinate Mg(2+). Positions 1316–1319 (DECH) match the DECH box motif. The interval 1486–1497 (QRRGRTGRGKPG) is RNA-binding. The helical transmembrane segment at 1658–1678 (STWVLVGGVLAALAAYCLSTG) threads the bilayer. The NS3-binding stretch occupies residues 1679–1690 (CVVIVGRIVLSG). The Cytoplasmic segment spans residues 1679–1805 (CVVIVGRIVL…AVTSPLTTGQ (127 aa)). The chain crosses the membrane as a helical span at residues 1806 to 1824 (TLLFNILGGWVAAQLAAPG). Residues 1825–1828 (AATA) lie on the Lumenal side of the membrane. The helical transmembrane segment at 1829 to 1849 (FVGAGLAGAALDSVGLGKVLV) threads the bilayer. The glycine zipper stretch occupies residues 1833–1861 (GLAGAALDSVGLGKVLVDILAGYGAGVAG). Residue Asp-1850 is a topological domain, cytoplasmic. The chain crosses the membrane as a helical span at residues 1851-1871 (ILAGYGAGVAGALVAFKIMSG). The Lumenal portion of the chain corresponds to 1872–1881 (EVPSTEDLVN). Residues 1882-1902 (LLPAILSPGALAVGVVFASIL) form a helical membrane-spanning segment. At 1903–1972 (RRRVGPGEGA…WISSECTTPC (70 aa)) the chain is on the cytoplasmic side. The S-palmitoyl cysteine; by host moiety is linked to residue Cys-1968. Cys-1972 carries S-palmitoyl cysteine; by host; partial lipidation. An intramembrane segment occupies 1973–2003 (SGSWLRDIWDWICEVLSDFKTWLKAKLMPQL). The segment at 1978 to 1998 (RDIWDWICEVLSDFKTWLKAK) is membrane-binding. The Cytoplasmic portion of the chain corresponds to 2004 to 2990 (PGIPFVSCQR…YHSVSHARPR (987 aa)). The D1; RNA-binding stretch occupies residues 2005–2221 (GIPFVSCQRG…KATCTANHDS (217 aa)). 4 residues coordinate Zn(2+): Cys-2011, Cys-2029, Cys-2031, and Cys-2052. An FKBP8-binding region spans residues 2120–2208 (EFFTELDGVR…ASSSASQLSA (89 aa)). The segment at 2120–2332 (EFFTELDGVR…PVPPPRKKRT (213 aa)) is transcriptional activation. The interaction with non-structural protein 4A stretch occupies residues 2135–2139 (PPCKP). The tract at residues 2189 to 2441 (RLARGSPPSM…TPCAAEEQKL (253 aa)) is interaction with host SKP2. Residue Ser-2194 is modified to Phosphoserine; by host; in p56. Phosphoserine; by host; in p58 is present on Ser-2197. Phosphoserine; by host; in p56 and p58, regulates intracellular NS5A distribution is present on Ser-2201. Phosphoserine; by host; in p58 is present on residues Ser-2204, Ser-2207, and Ser-2210. An ISDR region spans residues 2210–2249 (SLKATCTANHDSPDAELIEANLLWRQEMGGNITRVESENK). The segment at 2210-2275 (SLKATCTANH…REVSVPAEIL (66 aa)) is interaction with EIF2AK2/PKR. The tract at residues 2223-2315 (DAELIEANLL…YEPPVVHGCP (93 aa)) is D2. Positions 2224 to 2315 (AELIEANLLW…YEPPVVHGCP (92 aa)) are disordered. Positions 2249 to 2306 (KVVILDSFDPLVAEEDEREVSVPAEILRKSRRFAPALPVWARPDYNPLLVETWKKPDY) are NS4B-binding. Residues 2281-2297 (FAPALPVWARPDYNPLL) are interaction with human PPIA/CYPA. The segment covering 2315 to 2326 (PLPPPRSPPVPP) has biased composition (pro residues). At Ser-2321 the chain carries Phosphoserine; by host. Positions 2322-2325 (PPVP) match the SH3-binding motif. The short motif at 2326–2334 (PPRKKRTVV) is the Nuclear localization signal element. Residues 2329–2420 (KKRTVVLTES…GADTEDVVCC (92 aa)) form a D3 region. Residues 2332-2441 (TVVLTESTLP…TPCAAEEQKL (110 aa)) are interaction with host IFI27. Residues 2346-2409 (ELATKSFGSS…LSDGSWSTVS (64 aa)) are disordered. Residues 2349–2369 (TKSFGSSSTSGITGDNTTTSS) are compositionally biased toward low complexity. Residue Lys-2350 forms a Glycyl lysine isopeptide (Lys-Gly) (interchain with G-Cter in ubiquitin) linkage. Residues 2354–2377 (SSSTSGITGDNTTTSSEPAPSGCP) are V3. The segment at 2367–2417 (TSSEPAPSGCPPDSDVESYSSMPPLEGEPGDPDLSDGSWSTVSSGADTEDV) is interaction with host VAPB. A phosphoserine; by host mark is found at Ser-2449 and Ser-2462. One can recognise a RdRp catalytic domain in the interval 2634-2752 (PMGLSYDTRC…ICESAGVQED (119 aa)). Mg(2+) contacts are provided by Asp-2640, Asp-2738, and Asp-2739. The helical transmembrane segment at 2991-3011 (WFWFCLLLLAAGVGIYLLPNR) threads the bilayer.

The protein belongs to the hepacivirus polyprotein family. As to quaternary structure, homooligomer. Interacts with E1 (via C-terminus). Interacts with the non-structural protein 5A. Interacts (via N-terminus) with host STAT1 (via SH2 domain); this interaction results in decreased STAT1 phosphorylation and ubiquitin-mediated proteasome-dependent STAT1 degradation, leading to decreased IFN-stimulated gene transcription. Interacts with host STAT3; this interaction constitutively activates STAT3. Associates with host LTBR receptor. Interacts with host TNFRSF1A receptor and possibly induces apoptosis. Interacts with host HNRPK. Interacts with host YWHAE. Interacts with host UBE3A/E6AP. Interacts with host DDX3X. Interacts with host APOA2. Interacts with host RXRA protein. Interacts with host SP110 isoform 3/Sp110b; this interaction sequesters the transcriptional corepressor SP110 away from the nucleus. Interacts with host CREB3 nuclear transcription protein; this interaction triggers cell transformation. Interacts with host ACY3. Interacts with host C1QR1. Interacts with host RBM24; this interaction, which enhances the interaction of the mature core protein with 5'-UTR, may inhibit viral translation and favor replication. Interacts (via N-terminus) with host EIF2AK2/PKR (via N-terminus); this interaction induces the autophosphorylation of EIF2AK2. Part of the viral assembly initiation complex composed of NS2, E1, E2, NS3, NS4A, NS5A and the mature core protein. In terms of assembly, forms a heterodimer with envelope glycoprotein E2. Interacts with mature core protein. Interacts with protease NS2. The heterodimer E1/E2 interacts with host CLDN1; this interaction plays a role in viral entry into host cell. Interacts with host SPSB2 (via C-terminus). Part of the viral assembly initiation complex composed of NS2, E1, E2, NS3, NS4A, NS5A and the mature core protein. Interacts with host NEURL3; this interaction prevents E1 binding to glycoprotein E2. Forms a heterodimer with envelope glycoprotein E1. Interacts with host CD81 and SCARB1 receptors; these interactions play a role in viral entry into host cell. Interacts with host EIF2AK2/PKR; this interaction inhibits EIF2AK2 and probably allows the virus to evade the innate immune response. Interacts with host CD209/DC-SIGN and CLEC4M/DC-SIGNR. Interact with host SPCS1; this interaction is essential for viral particle assembly. Interacts with protease NS2. The heterodimer E1/E2 interacts with host CLDN1; this interaction plays a role in viral entry into host cell. Part of the viral assembly initiation complex composed of NS2, E1, E2, NS3, NS4A, NS5A and the mature core protein. Interacts with host SLC3A2/4F2hc; the interaction may facilitate viral entry into host cell. Interacts with human PLSCR1. As to quaternary structure, homohexamer. Homoheptamer. Interacts with protease NS2. In terms of assembly, homodimer. Interacts with host SPCS1; this interaction is essential for viral particle assembly. Interacts with envelope glycoprotein E1. Interacts with envelope glycoprotein E2. Interacts with viroporin p7. Interacts with serine protease/helicase NS3. Part of the replication complex composed of NS2, NS3, NS4A, NS4B, NS5A and the RNA-directed RNA polymerase embedded in an ER-derived membranous web. Part of the viral assembly initiation complex composed of NS2, E1, E2, NS3, NS4A, NS5A and the mature core protein. Interacts with protease NS2. Interacts with non-structural protein 4A; this interaction stabilizes the folding of NS3 serine protease. NS3-NS4A interaction is essential for NS3 activation and allows membrane anchorage of the latter. NS3/NS4A complex also prevents phosphorylation of host IRF3, thus preventing the establishment of dsRNA induced antiviral state. Interacts with host MAVS; this interaction leads to the cleavage and inhibition of host MAVS. Interacts with host TICAM1; this interaction leads to the cleavage and inhibition of host TICAM1. Interacts with host TANK-binding kinase/TBK1; this interaction results in the inhibition of the association between TBK1 and IRF3, which leads to the inhibition of IRF3 activation. Interacts with host RBM24. Part of the replication complex composed of NS2, NS3, NS4A, NS4B, NS5A and the RNA-directed RNA polymerase embedded in an ER-derived membranous web. Part of the viral assembly initiation complex composed of NS2, E1, E2, NS3, NS4A, NS5A and the mature core protein. As to quaternary structure, interacts with NS3 serine protease; this interaction stabilizes the folding of NS3 serine protease. NS3-NS4A interaction is essential for NS3 activation and allows membrane anchorage of the latter. Interacts with non-structural protein 5A (via N-terminus). Part of the replication complex composed of NS2, NS3, NS4A, NS4B, NS5A and the RNA-directed RNA polymerase embedded in an ER-derived membranous web. Part of the viral assembly initiation complex composed of NS2, E1, E2, NS3, NS4A, NS5A and the mature core protein. In terms of assembly, homomultimer. Interacts with non-structural protein NS5A. Interacts with host PLA2G4C; this interaction likely initiates the recruitment of replication complexes to lipid droplets. Interacts with host STING; this interaction disrupts the interaction between STING and TBK1 thereby suppressing the interferon signaling. Interacts with host METTL22; this interaction may promote the recruitment of NS4B in the proximity of lipid droplet. Part of the replication complex composed of NS2, NS3, NS4A, NS4B, NS5A and the RNA-directed RNA polymerase embedded in an ER-derived membranous web. Monomer. Homodimer; dimerization is required for RNA-binding. Interacts with the mature core protein. Interacts (via N-terminus) with non-structural protein 4A. Interacts with non-structural protein 4B. Interacts (via region D2) with RNA-directed RNA polymerase. Part of the viral assembly initiation complex composed of NS2, E1, E2, NS3, NS4A, NS5A and the mature core protein. Part of the replication complex composed of NS2, NS3, NS4A, NS4B, NS5A and the RNA-directed RNA polymerase embedded in an ER-derived membranous web. Interacts with host GRB2. Interacts with host BIN1. Interacts with host PIK3R1. Interacts with host SRCAP. Interacts with host FKBP8. Interacts (via C-terminus) with host VAPB (via MSP domain). Interacts with host EIF2AK2/PKR; this interaction leads to disruption of EIF2AK2 dimerization by NS5A and probably allows the virus to evade the innate immune response. Interacts (via N-terminus) with host PACSIN2 (via N-terminus); this interaction attenuates protein kinase C alpha-mediated phosphorylation of PACSIN2 by disrupting the interaction between PACSIN2 and PRKCA. Interacts (via N-terminus) with host SRC kinase (via SH2 domain). Interacts with most Src-family kinases. Interacts with host IFI27 and SKP2; promotes the ubiquitin-mediated proteasomal degradation of NS5A. Interacts with host GPS2. Interacts with host TNFRSF21; this interaction allows the modulation by the virus of JNK, p38 MAPK, STAT3, and Akt signaling pathways in a DR6-dependent manner. Interacts (via N-terminus) with host CIDEB (via N-terminus); this interaction seems to regulate the association of HCV particles with APOE. Interacts with host CHKA/Choline Kinase-alpha; CHKA bridges host PI4KA and NS5A and potentiates NS5A-stimulated PI4KA activity, which then facilitates the targeting of the ternary complex to the ER for viral replication. Interacts with host SPSB2 (via C-terminus); this interaction targets NS5A for ubiquitination and degradation. Interacts with host RAB18; this interaction may promote the association of NS5A and other replicase components with lipid droplets. Interacts (via region D2) with host PPIA/CYPA; the interaction stimulates RNA-binding ability of NS5A and is dependent on the peptidyl-prolyl cis-trans isomerase activity of PPIA/CYPA. Interacts with host TRIM14; this interaction induces the degradation of NS5A. As to quaternary structure, homooligomer. Interacts with non-structural protein 5A. Interacts with host VAPB. Interacts with host PRK2/PKN2. Interacts with host HNRNPA1 and SEPT6; these interactions facilitate the viral replication. Part of the replication complex composed of NS2, NS3, NS4A, NS4B, NS5A and the RNA-directed RNA polymerase embedded in an ER-derived membranous web. It depends on Zn(2+) as a cofactor. Requires Mg(2+) as cofactor. In terms of processing, specific enzymatic cleavages in vivo yield mature proteins. The structural proteins, core, E1, E2 and p7 are produced by proteolytic processing by host signal peptidases. The core protein precursor is synthesized as a 23 kDa, which is retained in the ER membrane through the hydrophobic signal peptide. Cleavage by the signal peptidase releases the 21 kDa mature core protein. The cleavage of the core protein precursor occurs between aminoacids 176 and 188 but the exact cleavage site is not known. Some degraded forms of the core protein appear as well during the course of infection. The other proteins (p7, NS2, NS3, NS4A, NS4B, NS5A and NS5B) are cleaved by the viral proteases. Autoprocessing between NS2 and NS3 is mediated by the NS2 cysteine protease catalytic domain and regulated by the NS3 N-terminal domain. Post-translationally, phosphorylated by host PKC and PKA. Ubiquitinated; mediated by UBE3A and leading to core protein subsequent proteasomal degradation. In terms of processing, highly N-glycosylated. Post-translationally, palmitoylation is required for NS2/3 autoprocessing and E2 recruitment to membranes. Palmitoylated. This modification may play a role in its polymerization or in protein-protein interactions. In terms of processing, cleaved by host caspases which are probably activated by the viral infection. Post-translationally, ubiquitinated. Ubiquitination, most probably at Lys-2350, mediated by host IFI27 and SKP2 leads to proteasomal degradation, restricting viral infection. Ubiquitination by host TRIM22 leads to interruption of viral replication. Phosphorylated on serines in a basal form termed p56. p58 is a hyperphosphorylated form of p56. p56 and p58 coexist in the cell in roughly equivalent amounts. Hyperphosphorylation is dependent on the presence of NS4A. Host CSNK1A1/CKI-alpha, PI4KA or RPS6KB1 kinases may be responsible for NS5A phosphorylation. Phosphorylated NS5A is involved in viral replication. In terms of processing, tyrosine phosphorylation is essential for the interaction with host SRC. Post-translationally, the N-terminus is phosphorylated by host PRK2/PKN2.

It localises to the host endoplasmic reticulum membrane. It is found in the host mitochondrion membrane. Its subcellular location is the virion. The protein resides in the host cytoplasm. The protein localises to the host nucleus. It localises to the host lipid droplet. It is found in the virion membrane. Its subcellular location is the host mitochondrion. The protein resides in the host cell membrane. The protein localises to the host perinuclear region. The enzyme catalyses Hydrolysis of four peptide bonds in the viral precursor polyprotein, commonly with Asp or Glu in the P6 position, Cys or Thr in P1 and Ser or Ala in P1'.. It catalyses the reaction a ribonucleoside 5'-triphosphate + H2O = a ribonucleoside 5'-diphosphate + phosphate + H(+). It carries out the reaction ATP + H2O = ADP + phosphate + H(+). The catalysed reaction is RNA(n) + a ribonucleoside 5'-triphosphate = RNA(n+1) + diphosphate. Its activity is regulated as follows. Inhibited by the antiviral drug hexamethylene amiloride. Inhibited by amantadine. Inhibition by amantadine appears to be genotype-dependent. Also inhibited by long-alkyl-chain iminosugar derivatives. Activity is up-regulated by PRK2/PKN2-mediated phosphorylation. Packages viral RNA to form a viral nucleocapsid, and promotes virion budding. Participates in the viral particle production as a result of its interaction with the non-structural protein 5A. Binds RNA and may function as a RNA chaperone to induce the RNA structural rearrangements taking place during virus replication. Modulates viral translation initiation by interacting with viral IRES and 40S ribosomal subunit. Affects various cell signaling pathways, host immunity and lipid metabolism. Prevents the establishment of cellular antiviral state by blocking the interferon-alpha/beta (IFN-alpha/beta) and IFN-gamma signaling pathways and by blocking the formation of phosphorylated STAT1 and promoting ubiquitin-mediated proteasome-dependent degradation of STAT1. Activates STAT3 leading to cellular transformation. Regulates the activity of cellular genes, including c-myc and c-fos. May repress the promoter of p53, and sequester CREB3 and SP110 isoform 3/Sp110b in the cytoplasm. Represses cell cycle negative regulating factor CDKN1A, thereby interrupting an important check point of normal cell cycle regulation. Targets transcription factors involved in the regulation of inflammatory responses and in the immune response: suppresses NF-kappa-B activation, and activates AP-1. Binds to dendritic cells (DCs) via C1QR1, resulting in down-regulation of T-lymphocytes proliferation. Alters lipid metabolism by interacting with hepatocellular proteins involved in lipid accumulation and storage. Induces up-regulation of FAS promoter activity, and thereby contributes to the increased triglyceride accumulation in hepatocytes (steatosis). In terms of biological role, forms a heterodimer with envelope glycoprotein E2, which mediates virus attachment to the host cell, virion internalization through clathrin-dependent endocytosis and fusion with host membrane. Fusion with the host cell is most likely mediated by both E1 and E2, through conformational rearrangements of the heterodimer required for fusion rather than a classical class II fusion mechanism. E1/E2 heterodimer binds host apolipoproteins such as APOB and APOE thereby forming a lipo-viro-particle (LVP). APOE associated to the LVP allows the initial virus attachment to cell surface receptors such as the heparan sulfate proteoglycans (HSPGs), syndecan-1 (SDC1), syndecan-1 (SDC2), the low-density lipoprotein receptor (LDLR) and scavenger receptor class B type I (SCARB1). The cholesterol transfer activity of SCARB1 allows E2 exposure and binding of E2 to SCARB1 and the tetraspanin CD81. E1/E2 heterodimer binding on CD81 activates the epithelial growth factor receptor (EGFR) signaling pathway. Diffusion of the complex E1/E2-EGFR-SCARB1-CD81 to the cell lateral membrane allows further interaction with Claudin 1 (CLDN1) and occludin (OCLN) to finally trigger HCV entry. Functionally, forms a heterodimer with envelope glycoprotein E1, which mediates virus attachment to the host cell, virion internalization through clathrin-dependent endocytosis and fusion with host membrane. Fusion with the host cell is most likely mediated by both E1 and E2, through conformational rearrangements of the heterodimer required for fusion rather than a classical class II fusion mechanism. The interaction between E2 and host apolipoprotein E/APOE allows the proper assembly, maturation and infectivity of the viral particles. This interaction is probably promoted via the up-regulation of cellular autophagy by the virus. E1/E2 heterodimer binds host apolipoproteins such as APOB and APOE thereby forming a lipo-viro-particle (LVP). APOE associated to the LVP allows the initial virus attachment to cell surface receptors such as the heparan sulfate proteoglycans (HSPGs), syndecan-1 (SDC1), syndecan-1 (SDC2), the low-density lipoprotein receptor (LDLR) and scavenger receptor class B type I (SCARB1). The cholesterol transfer activity of SCARB1 allows E2 exposure and binding of E2 to SCARB1 and the tetraspanin CD81. E1/E2 heterodimer binding on CD81 activates the epithelial growth factor receptor (EGFR) signaling pathway. Diffusion of the complex E1/E2-EGFR-SCARB1-CD81 to the cell lateral membrane allows further interaction with Claudin 1 (CLDN1) and occludin (OCLN) to finally trigger HCV entry. Inhibits host EIF2AK2/PKR activation, preventing the establishment of an antiviral state. Viral ligand for CD209/DC-SIGN and CLEC4M/DC-SIGNR, which are respectively found on DCs, and on liver sinusoidal endothelial cells and macrophage-like cells of lymph node sinuses. These interactions allow the capture of circulating HCV particles by these cells and subsequent facilitated transmission to permissive cells such as hepatocytes and lymphocyte subpopulations. The interaction between E2 and host amino acid transporter complex formed by SLC3A2 and SLC7A5/LAT1 may facilitate viral entry into host cell. Its function is as follows. Ion channel protein that acts as a viroporin and plays an essential role in the assembly, envelopment and secretion of viral particles. Participates in virus envelopment by coordinating the encounter between NS5A and NS2-based assembly sites loaded with E1/E2 heterodimer, which subsequently leads to nucleocapsid envelopment. Creates a pore in acidic organelles and releases Ca(2+) and H(+) in the cytoplasm of infected cells, leading to a productive viral infection. High levels of cytoplasmic Ca(2+) may trigger membrane trafficking and transport of viral ER-associated proteins to viroplasms, sites of viral genome replication. The release of Ca(2+) may also activate the inflamasome leading to chronic inflammation. Targets also host mitochondria and induces mitochondrial depolarization. In addition of its role as a viroporin, acts as a lipid raft adhesion factor. Cysteine protease required for the proteolytic auto-cleavage between the non-structural proteins NS2 and NS3. The N-terminus of NS3 is required for the function of NS2 protease (active region NS2-3). Promotes the initiation of viral particle assembly by mediating the interaction between structural and non-structural proteins. In terms of biological role, displays three enzymatic activities: serine protease with a chymotrypsin-like fold, NTPase and RNA helicase. NS3 serine protease, in association with NS4A, is responsible for the cleavages of NS3-NS4A, NS4A-NS4B, NS4B-NS5A and NS5A-NS5B. The NS3/NS4A complex prevents phosphorylation of host IRF3, thus preventing the establishment of dsRNA induced antiviral state. The NS3/NS4A complex induces host amino acid transporter component SLC3A2, thus contributing to HCV propagation. NS3 RNA helicase binds to RNA and unwinds both dsDNA and dsRNA in the 3' to 5' direction, and likely resolves RNA complicated stable secondary structures in the template strand. Binds a single ATP and catalyzes the unzipping of a single base pair of dsRNA. Inhibits host antiviral proteins TBK1 and IRF3 thereby preventing the establishment of an antiviral state. Cleaves host MAVS/CARDIF thereby preventing the establishment of an antiviral state. Cleaves host TICAM1/TRIF, thereby disrupting TLR3 signaling and preventing the establishment of an antiviral state. Functionally, peptide cofactor which forms a non-covalent complex with the N-terminal of NS3 serine protease. The NS3/NS4A complex prevents phosphorylation of host IRF3, thus preventing the establishment of dsRNA induced antiviral state. The NS3/NS4A complex induces host amino acid transporter component SLC3A2, thus contributing to HCV propagation. Its function is as follows. Induces a specific membrane alteration that serves as a scaffold for the virus replication complex. This membrane alteration gives rise to the so-called ER-derived membranous web that contains the replication complex. NS4B self-interaction contributes to its function in membranous web formation. Promotes host TRIF protein degradation in a CASP8-dependent manner thereby inhibiting host TLR3-mediated interferon signaling. Disrupts the interaction between STING and TBK1 contributing to the inhibition of interferon signaling. Phosphorylated protein that is indispensable for viral replication and assembly. Both hypo- and hyperphosphorylated states are required for the viral life cycle. The hyperphosphorylated form of NS5A is an inhibitor of viral replication. Involved in RNA-binding and especially in binding to the viral genome. Zinc is essential for RNA-binding. Participates in the viral particle production as a result of its interaction with the viral mature core protein. Its interaction with host VAPB may target the viral replication complex to vesicles. Down-regulates viral IRES translation initiation. Mediates interferon resistance, presumably by interacting with and inhibiting host EIF2AK2/PKR. Prevents BIN1-induced apoptosis. Acts as a transcriptional activator of some host genes important for viral replication when localized in the nucleus. Via the interaction with host PACSIN2, modulates lipid droplet formation in order to promote virion assembly. Modulates TNFRSF21/DR6 signaling pathway for viral propagation. In terms of biological role, RNA-dependent RNA polymerase that performs primer-template recognition and RNA synthesis during viral replication. Initiates RNA transcription/replication at a flavin adenine dinucleotide (FAD), resulting in a 5'- FAD cap on viral RNAs. In this way, recognition of viral 5' RNA by host pattern recognition receptors can be bypassed, thereby evading activation of antiviral pathways. The protein is Genome polyprotein of Homo sapiens (Human).